A 547-amino-acid polypeptide reads, in one-letter code: MSSNTMLQKTLLILISFSVVTWMIFIISQNFTKLWSALNLSISVHYWNNSAKSLFPKTSLIPLKPLTETELRIKEIIEKLDQQIPPRPFTHVNTTTSATHSTATILNPRDTYCRGDQLDILLEVRDHLGQRKQYGGDFLRARMSSPALTAGASGKVMDFNNGTYLVSFTLFWEGQVSLSLLLIHPSEGASALWRARNQGYDKIIFKGKFVNGTSHVFTECGLTLNSNAELCEYLDDRDQEAFYCMKPQHMPCEALTYMTTRNREVSYLTDKENSLFHRSKVGVEMMKDRKHIDVTNCNKREKIEETCQVGMKPPVPGGYTLQGKWITTFCNQVQLDTIKINGCLKGKLIYLLGDSTLRQWIYYFPKVVKTLKFFDLHETGIFKKHLLLDAERHTQIQWKKHSYPFVTFQLYSLIDHDYIPREIDRLSGDKNTAIVITFGQHFRPFPIDIFIRRAIGVQKAIERLFLRSPATKVIIKTENIREMHIETERFGDFHGYIHYLIMKDIFKDLNVGIIDAWDMTIAYGTDTIHPPDHVIGNQINMFLNYIC.

The signal sequence occupies residues 1–21 (MSSNTMLQKTLLILISFSVVT). N-linked (GlcNAc...) asparagine glycosylation is found at asparagine 39 and asparagine 211.

The protein belongs to the NXPE family.

It localises to the secreted. The polypeptide is NXPE family member 1 (NXPE1) (Homo sapiens (Human)).